A 168-amino-acid polypeptide reads, in one-letter code: Transcription antitermination protein NusB (168 aa).

It belongs to the NusB family.

In terms of biological role, involved in transcription antitermination. Required for transcription of ribosomal RNA (rRNA) genes. Binds specifically to the boxA antiterminator sequence of the ribosomal RNA (rrn) operons. This Brucella anthropi (strain ATCC 49188 / DSM 6882 / CCUG 24695 / JCM 21032 / LMG 3331 / NBRC 15819 / NCTC 12168 / Alc 37) (Ochrobactrum anthropi) protein is Transcription antitermination protein NusB.